The primary structure comprises 62 residues: Conotoxin Gm5.2 (62 aa).

An N-terminal signal peptide occupies residues 1–22 (MRCLPVFVILLLLIASAPSVDA). Residues 23-49 (QPKTKDDVPLAPLHDNIRSTLQTLRKK) constitute a propeptide that is removed on maturation. Position 60 is a serine amide (Ser-60).

Belongs to the conotoxin T superfamily. Contains 2 disulfide bonds that can be either 'C1-C3, C2-C4' or 'C1-C4, C2-C3', since these disulfide connectivities have been observed for conotoxins with cysteine framework V (for examples, see AC P0DQQ7 and AC P81755). In terms of tissue distribution, expressed by the venom duct.

The protein localises to the secreted. The sequence is that of Conotoxin Gm5.2 from Conus gloriamaris (Glory-of-the-Sea cone).